Here is a 255-residue protein sequence, read N- to C-terminus: 2-dehydro-3,6-dideoxy-6-sulfogluconate aldolase (255 aa).

The Proton acceptor role is filled by histidine 38. Glutamate 141 and aspartate 167 together coordinate a divalent metal cation.

It belongs to the HpcH/HpaI aldolase family. In terms of assembly, homohexamer; trimer of dimers. A divalent metal cation serves as cofactor.

It carries out the reaction 2-dehydro-3,6-dideoxy-6-sulfo-D-gluconate = (2S)-3-sulfolactaldehyde + pyruvate. Functionally, catalyzes the retro-aldol cleavage of 2-dehydro-3,6-dideoxy-6-sulfo-D-gluconate to (2S)-3-sulfolactaldehyde and pyruvate. Is involved in a degradation pathway of sulfoquinovose (SQ) that allows P.putida SQ1 to use SQ as the sole carbon and energy source for growth. This chain is 2-dehydro-3,6-dideoxy-6-sulfogluconate aldolase, found in Pseudomonas putida (Arthrobacter siderocapsulatus).